We begin with the raw amino-acid sequence, 179 residues long: Large ribosomal subunit protein uL5 (179 aa).

This sequence belongs to the universal ribosomal protein uL5 family. In terms of assembly, part of the 50S ribosomal subunit; part of the 5S rRNA/L5/L18/L25 subcomplex. Contacts the 5S rRNA and the P site tRNA. Forms a bridge to the 30S subunit in the 70S ribosome.

In terms of biological role, this is one of the proteins that bind and probably mediate the attachment of the 5S RNA into the large ribosomal subunit, where it forms part of the central protuberance. In the 70S ribosome it contacts protein S13 of the 30S subunit (bridge B1b), connecting the 2 subunits; this bridge is implicated in subunit movement. Contacts the P site tRNA; the 5S rRNA and some of its associated proteins might help stabilize positioning of ribosome-bound tRNAs. This chain is Large ribosomal subunit protein uL5, found in Clostridium novyi (strain NT).